The following is a 143-amino-acid chain: Small ribosomal subunit protein uS12 (143 aa).

Residues 1-19 (MGKPRGIRTARKHVNHRRE) show a composition bias toward basic residues. The disordered stretch occupies residues 1–21 (MGKPRGIRTARKHVNHRREQR). At Pro-62 the chain carries Hydroxyproline.

Belongs to the universal ribosomal protein uS12 family. Component of the 40S small ribosomal subunit.

The protein resides in the cytoplasm. Its subcellular location is the cytosol. It is found in the rough endoplasmic reticulum. In Papilio dardanus (African swallowtail butterfly), this protein is Small ribosomal subunit protein uS12 (RpS23).